A 203-amino-acid chain; its full sequence is Ribosome hibernation promotion factor (203 aa).

It belongs to the HPF/YfiA ribosome-associated protein family. Long HPF subfamily. As to quaternary structure, interacts with 100S ribosomes.

The protein resides in the cytoplasm. Functionally, required for dimerization of active 70S ribosomes into 100S ribosomes in stationary phase; 100S ribosomes are translationally inactive and sometimes present during exponential growth. This is Ribosome hibernation promotion factor from Bradyrhizobium diazoefficiens (strain JCM 10833 / BCRC 13528 / IAM 13628 / NBRC 14792 / USDA 110).